Consider the following 744-residue polypeptide: Eukaryotic translation initiation factor 3 subunit B (744 aa).

Residues 1 to 20 (MAPSFDHLPDPEEDEYDEEE) are disordered. Positions 11–20 (PEEDEYDEEE) are enriched in acidic residues. Residues 40–126 (TFVVIDGLPE…HTLRVNKLTD (87 aa)) form the RRM domain. 4 WD repeats span residues 193-232 (DRQH…RQKR), 234-290 (AHPF…PLRS), 307-348 (PVKR…LLDK), and 577-622 (ADHY…LREE). Positions 699-714 (EREDAGLPRDPLEPLK) are enriched in basic and acidic residues. The tract at residues 699–722 (EREDAGLPRDPLEPLKSKMASGDE) is disordered.

Belongs to the eIF-3 subunit B family. Component of the eukaryotic translation initiation factor 3 (eIF-3) complex.

Its subcellular location is the cytoplasm. Functionally, RNA-binding component of the eukaryotic translation initiation factor 3 (eIF-3) complex, which is involved in protein synthesis of a specialized repertoire of mRNAs and, together with other initiation factors, stimulates binding of mRNA and methionyl-tRNAi to the 40S ribosome. The eIF-3 complex specifically targets and initiates translation of a subset of mRNAs involved in cell proliferation. In Sclerotinia sclerotiorum (strain ATCC 18683 / 1980 / Ss-1) (White mold), this protein is Eukaryotic translation initiation factor 3 subunit B (prt1).